The sequence spans 1737 residues: Intraflagellar transport protein osm-1 (1737 aa).

7 WD repeats span residues 14–53, 63–103, 110–150, 151–189, 191–229, 233–273, and 511–553; these read DGEA…KDRF, GKKS…NEKK, VQPS…SLYK, TDET…QSKI, TLQV…QQFD, QSEK…WDEG, and DQRS…EQVT. 7 TPR repeats span residues 700 to 737, 803 to 836, 848 to 881, 907 to 940, 979 to 1012, 1037 to 1070, and 1137 to 1170; these read NDTE…KTSY, SQLY…GKAI, VTLE…KKAV, TGYY…NDAI, HGRF…DDVL, RGDL…SDAY, and GTVH…ELAV.

It belongs to the IFT172 family. In terms of assembly, component of the IFT complex B composed of at least che-2, che-13, dyf-1, dyf-3, dyf-6, dyf-11, dyf-13, ift-20, ift-74, ift-81, ifta-2, osm-1, osm-5 and osm-6. In terms of tissue distribution, expressed in amphid and phasmid chemosensory neurons, where it appears to concentrate at the base of the transition zones, which correspond to the basal bodies of motile and sensory cilia. Moves in the retrograde direction along cilia and dendrites, suggesting that it is retrieved from the distal endings of the cilia by a retrograde transport pathway that moves it along cilia and then dendrites, back to the neuronal cell body.

The protein localises to the cell projection. It is found in the cilium. Its function is as follows. Component of the intraflagellar transport (IFT) complex B required for transport of proteins in the motile cilium. May be required for ciliary entrance and transport of specific ciliary cargo proteins such as che-3 which are related to motility. Required for the maintenance and formation of chemosensory cilia that detect chemosensory cues. This chain is Intraflagellar transport protein osm-1, found in Caenorhabditis elegans.